The primary structure comprises 200 residues: DNA-directed RNA polymerase subunit 7-like protein (200 aa).

This sequence belongs to the eukaryotic RPB7/RPC8 RNA polymerase subunit family.

It is found in the nucleus. This is DNA-directed RNA polymerase subunit 7-like protein (NRPB7L) from Arabidopsis thaliana (Mouse-ear cress).